The sequence spans 1288 residues: SH3 domain and tetratricopeptide repeat-containing protein 2 (1288 aa).

SH3 domains are found at residues Glu-176 to Leu-240 and Ile-268 to Tyr-331. Residues Asn-386–Gln-395 are compositionally biased toward polar residues. 2 disordered regions span residues Asn-386–Gly-405 and Glu-410–Pro-444. 8 TPR repeats span residues Ala-528 to Ala-561, Arg-757 to Leu-790, Gly-836 to Val-869, Gly-1001 to Leu-1037, Leu-1084 to Arg-1118, Leu-1119 to Ala-1152, Leu-1166 to Trp-1199, and Ala-1210 to Leu-1244.

As to expression, strongly expressed in brain and spinal cord. Expressed at equal level in spinal cord and sciatic nerve. Weakly expressed in striated muscle.

The sequence is that of SH3 domain and tetratricopeptide repeat-containing protein 2 (SH3TC2) from Homo sapiens (Human).